Consider the following 293-residue polypeptide: G1/S-specific cyclin-D3 (293 aa).

A Cyclin N-terminal domain is found at 27 to 152 (VLQSLLRLEE…LVLGKLKWDL (126 aa)). The segment at 257–293 (REAAQTAPSPVPKAPGGSSSQGPSQTSTPTDVTAIHL) is disordered. A phosphoserine mark is found at S265 and S280. Over residues 271–286 (PGGSSSQGPSQTSTPT) the composition is skewed to low complexity. T284 carries the post-translational modification Phosphothreonine.

It belongs to the cyclin family. Cyclin D subfamily. Interacts with the CDK4 and CDK6 protein kinases to form a serine/threonine kinase holoenzyme complex. The cyclin subunit imparts substrate specificity to the complex. Interacts with ATF5. Interacts with EIF3K. Component of the ternary complex cyclin D/CDK4/CDKN1B required for nuclear translocation and modulation of CDK4-mediated kinase activity. Can form similar complexes with either CDKN1A or CDKN2A. In terms of processing, phosphorylation at Thr-284 by MAP kinases is required for ubiquitination and degradation by the DCX(AMBRA1) complex. Post-translationally, ubiquitinated by the DCX(AMBRA1) complex during the transition from G1 to S cell phase, leading to its degradation: ubiquitination is dependent on Thr-284 phosphorylation. The DCX(AMBRA1) complex represents the major regulator of CCND3 stability during the G1/S transition. Polyubiquitinated by the SCF(FBXL2) complex, leading to proteasomal degradation.

The protein resides in the nucleus. It localises to the cytoplasm. Its function is as follows. Regulatory component of the cyclin D3-CDK4 (DC) complex that phosphorylates and inhibits members of the retinoblastoma (RB) protein family including RB1 and regulates the cell-cycle during G(1)/S transition. Phosphorylation of RB1 allows dissociation of the transcription factor E2F from the RB/E2F complex and the subsequent transcription of E2F target genes which are responsible for the progression through the G(1) phase. Hypophosphorylates RB1 in early G(1) phase. Cyclin D-CDK4 complexes are major integrators of various mitogenenic and antimitogenic signals. Component of the ternary complex, cyclin D3/CDK4/CDKN1B, required for nuclear translocation and activity of the cyclin D-CDK4 complex. Shows transcriptional coactivator activity with ATF5 independently of CDK4. The chain is G1/S-specific cyclin-D3 from Rattus norvegicus (Rat).